The primary structure comprises 152 residues: Ribosome maturation factor RimP (152 aa).

It belongs to the RimP family.

The protein localises to the cytoplasm. In terms of biological role, required for maturation of 30S ribosomal subunits. The protein is Ribosome maturation factor RimP of Ruminiclostridium cellulolyticum (strain ATCC 35319 / DSM 5812 / JCM 6584 / H10) (Clostridium cellulolyticum).